The sequence spans 380 residues: Chaperone protein DnaJ (380 aa).

In terms of domain architecture, J spans Asp-5–Gly-69. The CR-type zinc finger occupies Gly-140–Ser-222. Cys-153, Cys-156, Cys-170, Cys-173, Cys-196, Cys-199, Cys-210, and Cys-213 together coordinate Zn(2+). CXXCXGXG motif repeat units lie at residues Cys-153 to Gly-160, Cys-170 to Gly-177, Cys-196 to Gly-203, and Cys-210 to Gly-217.

It belongs to the DnaJ family. In terms of assembly, homodimer. Zn(2+) is required as a cofactor.

It is found in the cytoplasm. Functionally, participates actively in the response to hyperosmotic and heat shock by preventing the aggregation of stress-denatured proteins and by disaggregating proteins, also in an autonomous, DnaK-independent fashion. Unfolded proteins bind initially to DnaJ; upon interaction with the DnaJ-bound protein, DnaK hydrolyzes its bound ATP, resulting in the formation of a stable complex. GrpE releases ADP from DnaK; ATP binding to DnaK triggers the release of the substrate protein, thus completing the reaction cycle. Several rounds of ATP-dependent interactions between DnaJ, DnaK and GrpE are required for fully efficient folding. Also involved, together with DnaK and GrpE, in the DNA replication of plasmids through activation of initiation proteins. This chain is Chaperone protein DnaJ, found in Lactiplantibacillus plantarum (strain ATCC BAA-793 / NCIMB 8826 / WCFS1) (Lactobacillus plantarum).